Reading from the N-terminus, the 156-residue chain is Dynein 16 kDa light chain, flagellar outer arm (156 aa).

The Thioredoxin domain maps to 2 to 116; that stretch reads AAGLPPVQYS…LNQQVLSLTP (115 aa). A disulfide bridge links C37 with C40.

As to quaternary structure, consists of at least 3 heavy chains (alpha, beta and gamma), 2 intermediate chains and 8 light chains.

The protein localises to the cell projection. It localises to the cilium. The protein resides in the flagellum. It is found in the cytoplasm. Its subcellular location is the cytoskeleton. The protein localises to the flagellum axoneme. Functionally, may be involved in regulating the redox state of functionally important thiol groups within dynein. This chain is Dynein 16 kDa light chain, flagellar outer arm, found in Chlamydomonas reinhardtii (Chlamydomonas smithii).